A 258-amino-acid chain; its full sequence is MHTKRIIPCLDVHNGRVVKGTNFLNLRDAGDPVLVGAEYGQAGADELVFLDITASSDARTIKLDMVRKVAETVFIPFTVGGGIRSIEDFKLILREGADKIAVNTAAIMNPTLISEAADKFGSQCVVVAIDAKCRPDNSGWNIYKNGGRIDMGIDAVEWAMKANELGAGEILLTSMDCDGTKNGYDLELTKQISENVSIPVIASGGAGTKEHFYEALTRGKADAVLAASLFHYKELEINDLKEYLRMKEVSVRLEDRSC.

Catalysis depends on residues Asp11 and Asp130.

It belongs to the HisA/HisF family. Heterodimer of HisH and HisF.

It is found in the cytoplasm. It catalyses the reaction 5-[(5-phospho-1-deoxy-D-ribulos-1-ylimino)methylamino]-1-(5-phospho-beta-D-ribosyl)imidazole-4-carboxamide + L-glutamine = D-erythro-1-(imidazol-4-yl)glycerol 3-phosphate + 5-amino-1-(5-phospho-beta-D-ribosyl)imidazole-4-carboxamide + L-glutamate + H(+). It functions in the pathway amino-acid biosynthesis; L-histidine biosynthesis; L-histidine from 5-phospho-alpha-D-ribose 1-diphosphate: step 5/9. IGPS catalyzes the conversion of PRFAR and glutamine to IGP, AICAR and glutamate. The HisF subunit catalyzes the cyclization activity that produces IGP and AICAR from PRFAR using the ammonia provided by the HisH subunit. In Lachnoclostridium phytofermentans (strain ATCC 700394 / DSM 18823 / ISDg) (Clostridium phytofermentans), this protein is Imidazole glycerol phosphate synthase subunit HisF.